Consider the following 347-residue polypeptide: NADH-ubiquinone oxidoreductase chain 2 (347 aa).

Helical transmembrane passes span 3 to 23 (PLILLLITLTVILGTLIVMMS), 25 to 45 (HWLMIWMGFEMNMLAVIPLLM), 59 to 79 (YFLTQATASMLLMLAIIINLM), 96 to 116 (IIMTLALMMKLGLAPFHFWVP), 122 to 142 (ISLTSGLILLTWQKLAPLSIL), 148 to 168 (VINPDLLLMASMLSIAIGGWG), 178 to 198 (ILAYSSIAHMGWMMSVLAFNP), 202 to 222 (LLNLFMYILMTSTTFMLFMVA), 240 to 260 (ITTSILIMMLSLGGLPPLAGF), 276 to 296 (IILATLMAITALLNLFFYIRL), and 326 to 346 (LPPLIIMSTLTLPLAPAMILL).

Belongs to the complex I subunit 2 family. As to quaternary structure, core subunit of respiratory chain NADH dehydrogenase (Complex I) which is composed of 45 different subunits. Interacts with TMEM242.

The protein resides in the mitochondrion inner membrane. The catalysed reaction is a ubiquinone + NADH + 5 H(+)(in) = a ubiquinol + NAD(+) + 4 H(+)(out). Core subunit of the mitochondrial membrane respiratory chain NADH dehydrogenase (Complex I) which catalyzes electron transfer from NADH through the respiratory chain, using ubiquinone as an electron acceptor. Essential for the catalytic activity and assembly of complex I. The protein is NADH-ubiquinone oxidoreductase chain 2 of Peropteryx kappleri (Greater dog-like bat).